The sequence spans 142 residues: UPF0332 protein PH1297 (142 aa).

Belongs to the UPF0332 family.

The chain is UPF0332 protein PH1297 from Pyrococcus horikoshii (strain ATCC 700860 / DSM 12428 / JCM 9974 / NBRC 100139 / OT-3).